The following is a 186-amino-acid chain: Elongation factor P (186 aa).

This sequence belongs to the elongation factor P family.

It is found in the cytoplasm. Its pathway is protein biosynthesis; polypeptide chain elongation. Involved in peptide bond synthesis. Stimulates efficient translation and peptide-bond synthesis on native or reconstituted 70S ribosomes in vitro. Probably functions indirectly by altering the affinity of the ribosome for aminoacyl-tRNA, thus increasing their reactivity as acceptors for peptidyl transferase. This Neisseria meningitidis serogroup A / serotype 4A (strain DSM 15465 / Z2491) protein is Elongation factor P.